Here is a 256-residue protein sequence, read N- to C-terminus: Hydroxyacylglutathione hydrolase (256 aa).

7 residues coordinate Zn(2+): His-55, His-57, Asp-59, His-60, His-113, Asp-130, and His-168.

The protein belongs to the metallo-beta-lactamase superfamily. Glyoxalase II family. In terms of assembly, monomer. The cofactor is Zn(2+).

The catalysed reaction is an S-(2-hydroxyacyl)glutathione + H2O = a 2-hydroxy carboxylate + glutathione + H(+). It functions in the pathway secondary metabolite metabolism; methylglyoxal degradation; (R)-lactate from methylglyoxal: step 2/2. Functionally, thiolesterase that catalyzes the hydrolysis of S-D-lactoyl-glutathione to form glutathione and D-lactic acid. The polypeptide is Hydroxyacylglutathione hydrolase (Psychromonas ingrahamii (strain DSM 17664 / CCUG 51855 / 37)).